Consider the following 115-residue polypeptide: MAFPTSSAQQAETNRKILEEIQTKKQLLIGLGSTTNQMPAPQLLGQPTVTAEFTQGVSVAPNAAGGIAAPRSAFNPTSSTTLGFFIPQDSYFGNSFIPVLPRLEPVPTSSAPNVK.

This sequence belongs to the SOSS-C family.

The chain is SOSS complex subunit C homolog from Drosophila grimshawi (Hawaiian fruit fly).